The following is a 329-amino-acid chain: tRNA(Ile)-lysidine synthase (329 aa).

An ATP-binding site is contributed by 37 to 42 (SGGSDS).

It belongs to the tRNA(Ile)-lysidine synthase family.

It localises to the cytoplasm. The catalysed reaction is cytidine(34) in tRNA(Ile2) + L-lysine + ATP = lysidine(34) in tRNA(Ile2) + AMP + diphosphate + H(+). Its function is as follows. Ligates lysine onto the cytidine present at position 34 of the AUA codon-specific tRNA(Ile) that contains the anticodon CAU, in an ATP-dependent manner. Cytidine is converted to lysidine, thus changing the amino acid specificity of the tRNA from methionine to isoleucine. This chain is tRNA(Ile)-lysidine synthase, found in Zymomonas mobilis subsp. mobilis (strain ATCC 31821 / ZM4 / CP4).